The primary structure comprises 211 residues: Ras-related protein RABB1b (211 aa).

13–20 is a binding site for GTP; it reads GDTGVGKS. The short motif at 35-43 is the Effector region element; the sequence is HDLTIGVEF. Residues 61–65, 119–122, and 149–150 each bind GTP; these read DTAGQ, NKCD, and SA. 2 S-geranylgeranyl cysteine lipidation sites follow: Cys209 and Cys210.

This sequence belongs to the small GTPase superfamily. Rab family.

It localises to the cell membrane. Intracellular vesicle trafficking and protein transport. In Arabidopsis thaliana (Mouse-ear cress), this protein is Ras-related protein RABB1b (RABB1B).